A 71-amino-acid chain; its full sequence is UPF0352 protein VCM66_1964 (71 aa).

It belongs to the UPF0352 family.

The sequence is that of UPF0352 protein VCM66_1964 from Vibrio cholerae serotype O1 (strain M66-2).